The sequence spans 468 residues: MGGCVSTSSKSTCSSWSNGEKPVRRPYLGIGCCVSKRAKRTFSDHIVSLQNLTSIPNRITSSSKSRSSCIFTQQGRKGINQDAMIVWEDFMSEDVTFCGVFDGHGPYGHLVARKVRDTLPVKLQFFFQTLQSKQNCSKGTRFRRNSSKSAVQEAVKEGSDEDKLKGLWGEAFLKSFKAMDKELRSHPNLDCFCSGSTGVTILKQGSNLFMGNIGDSRAILGSKDSNDSMVATQLTVDLKPDLPREAERIKRCKGRVFAMEDEPEVPRVWLPYDDAPGLAMARAFGDFCLKEYGVISVPEFTHRVLTDRDQFIVLASDGVWDVLSNEEVVDIVASATSRASAARTLVNSAAREWKLKYPTSKMDDCAVVCLFLDGKMDSESDYDEQGFSSATNAVESDDGQRSEPCLQRNFTVRSSSDQENETYGNVNTETDAEDEKTVGDQNWLGLQGVTRVNSLVQLPRFSEEKSKT.

The PPM-type phosphatase domain occupies 67-372 (SSCIFTQQGR…DDCAVVCLFL (306 aa)). Aspartate 102, glycine 103, aspartate 317, and aspartate 363 together coordinate Mn(2+). Residues 413–429 (RSSSDQENETYGNVNTE) are compositionally biased toward polar residues. The interval 413 to 442 (RSSSDQENETYGNVNTETDAEDEKTVGDQN) is disordered.

Belongs to the PP2C family. Mg(2+) is required as a cofactor. Requires Mn(2+) as cofactor.

The catalysed reaction is O-phospho-L-seryl-[protein] + H2O = L-seryl-[protein] + phosphate. It catalyses the reaction O-phospho-L-threonyl-[protein] + H2O = L-threonyl-[protein] + phosphate. This Arabidopsis thaliana (Mouse-ear cress) protein is Probable protein phosphatase 2C 52.